Here is a 127-residue protein sequence, read N- to C-terminus: Large ribosomal subunit protein bL20 (127 aa).

Belongs to the bacterial ribosomal protein bL20 family.

Its function is as follows. Binds directly to 23S ribosomal RNA and is necessary for the in vitro assembly process of the 50S ribosomal subunit. It is not involved in the protein synthesizing functions of that subunit. This is Large ribosomal subunit protein bL20 (rplT) from Streptomyces coelicolor (strain ATCC BAA-471 / A3(2) / M145).